Consider the following 219-residue polypeptide: Large ribosomal subunit protein uL3 (219 aa).

Belongs to the universal ribosomal protein uL3 family. In terms of assembly, part of the 50S ribosomal subunit. Forms a cluster with proteins L14 and L19.

Functionally, one of the primary rRNA binding proteins, it binds directly near the 3'-end of the 23S rRNA, where it nucleates assembly of the 50S subunit. The polypeptide is Large ribosomal subunit protein uL3 (Chlamydia pneumoniae (Chlamydophila pneumoniae)).